We begin with the raw amino-acid sequence, 227 residues long: tRNA (guanine-N(1)-)-methyltransferase (227 aa).

S-adenosyl-L-methionine is bound by residues Gly-112 and Leu-131–Leu-136.

The protein belongs to the RNA methyltransferase TrmD family. As to quaternary structure, homodimer.

It localises to the cytoplasm. It carries out the reaction guanosine(37) in tRNA + S-adenosyl-L-methionine = N(1)-methylguanosine(37) in tRNA + S-adenosyl-L-homocysteine + H(+). Its function is as follows. Specifically methylates guanosine-37 in various tRNAs. This is tRNA (guanine-N(1)-)-methyltransferase from Trichodesmium erythraeum (strain IMS101).